The primary structure comprises 506 residues: Maturase K (506 aa).

This sequence belongs to the intron maturase 2 family. MatK subfamily.

The protein localises to the plastid. Its subcellular location is the chloroplast. Its function is as follows. Usually encoded in the trnK tRNA gene intron. Probably assists in splicing its own and other chloroplast group II introns. This is Maturase K from Trifolium gracilentum (Pinpoint clover).